Here is a 350-residue protein sequence, read N- to C-terminus: Putative isomerase YbhH (350 aa).

Belongs to the PrpF family.

This Escherichia coli O6:H1 (strain CFT073 / ATCC 700928 / UPEC) protein is Putative isomerase YbhH (ybhH).